A 265-amino-acid chain; its full sequence is Pre-mRNA-splicing factor cwf15 (265 aa).

2 disordered regions span residues 1-31 (MTTA…ALPA) and 62-197 (AAHF…ALEQ). Positions 113 to 125 (EADEDASDSDDSV) are enriched in acidic residues. Residues 143-155 (SNSQESVDSSNSE) are compositionally biased toward low complexity. A coiled-coil region spans residues 155-205 (ESSDEESDSEDETQQLLRELENIKQERKREQMLQEEKNRALEQEKREREIA). The span at 156–167 (SSDEESDSEDET) shows a compositional bias: acidic residues. Positions 172 to 197 (RELENIKQERKREQMLQEEKNRALEQ) are enriched in basic and acidic residues.

This sequence belongs to the CWC15 family. As to quaternary structure, belongs to the 40S cdc5-associated complex (or cwf complex), a spliceosome sub-complex reminiscent of a late-stage spliceosome composed of the U2, U5 and U6 snRNAs and at least brr2, cdc5, cwf2/prp3, cwf3/syf1, cwf4/syf3, cwf5/ecm2, spp42/cwf6, cwf7/spf27, cwf8, cwf9, cwf10, cwf11, cwf12, prp45/cwf13, cwf14, cwf15, cwf16, cwf17, cwf18, cwf19, cwf20, cwf21, cwf22, cwf23, cwf24, cwf25, cwf26, cyp7/cwf27, cwf28, cwf29/ist3, lea1, msl1, prp5/cwf1, prp10, prp12/sap130, prp17, prp22, sap61, sap62, sap114, sap145, slu7, smb1, smd1, smd3, smf1, smg1 and syf2.

It localises to the nucleus. Involved in pre-mRNA splicing. In Schizosaccharomyces pombe (strain 972 / ATCC 24843) (Fission yeast), this protein is Pre-mRNA-splicing factor cwf15 (cwf15).